Reading from the N-terminus, the 1380-residue chain is Inverted formin-2 (1380 aa).

In terms of domain architecture, GBD/FH3 spans 1–330; it reads MSLKEGAHTK…RAVLLADDCQ (330 aa). Disordered stretches follow at residues 341 to 391 and 440 to 541; these read LVTS…SGIP and ISTS…PPPL. Residues 343-352 are compositionally biased toward basic residues; it reads TSKKHPSKEK. Positions 367–385 are enriched in basic and acidic residues; the sequence is QTDKPKDESCEEKTVKKDP. Residues 432 to 592 enclose the FH1 domain; that stretch reads VVSNAIDRIS…DYSLGYLPKA (161 aa). Composition is skewed to pro residues over residues 446–470 and 478–541; these read LPPP…PPLP and TPPP…PPPL. One can recognise an FH2 domain in the interval 593–981; that stretch reads YFKVNKPTLK…AEKRKKQLAD (389 aa). Coiled-coil stretches lie at residues 879-930 and 956-991; these read LKKL…KLAD and LKAK…KGEN. The 16-residue stretch at 1009-1024 folds into the WH2 domain; sequence DALLADIKKGFQLRKT. Disordered stretches follow at residues 1026–1049, 1188–1244, and 1260–1380; these read KTKT…DGTD, HKER…LSEA, and FQSS…CVVQ. Polar residues-rich tracts occupy residues 1206–1244, 1260–1284, and 1294–1303; these read GTES…LSEA, FQSS…QAQR, and TRDTTVTEGS. Over residues 1306–1322 the composition is skewed to basic and acidic residues; it reads EEDKCNDEGYPEHKTMG. Residues 1328 to 1339 are compositionally biased toward low complexity; sequence SSSHSTTLQQSS. Positions 1345–1359 are enriched in basic residues; it reads VKRGSSKHKKKRRSS.

Belongs to the formin homology family.

The sequence is that of Inverted formin-2 (inf2) from Xenopus tropicalis (Western clawed frog).